Reading from the N-terminus, the 447-residue chain is Gamma-glutamyl phosphate reductase (447 aa).

Belongs to the gamma-glutamyl phosphate reductase family.

It is found in the cytoplasm. The enzyme catalyses L-glutamate 5-semialdehyde + phosphate + NADP(+) = L-glutamyl 5-phosphate + NADPH + H(+). Its pathway is amino-acid biosynthesis; L-proline biosynthesis; L-glutamate 5-semialdehyde from L-glutamate: step 2/2. Functionally, catalyzes the NADPH-dependent reduction of L-glutamate 5-phosphate into L-glutamate 5-semialdehyde and phosphate. The product spontaneously undergoes cyclization to form 1-pyrroline-5-carboxylate. In Methanosarcina acetivorans (strain ATCC 35395 / DSM 2834 / JCM 12185 / C2A), this protein is Gamma-glutamyl phosphate reductase.